A 392-amino-acid polypeptide reads, in one-letter code: Phospho-N-acetylmuramoyl-pentapeptide-transferase (392 aa).

10 consecutive transmembrane segments (helical) span residues 28-48 (IIAA…KLIA), 76-96 (TMGG…FADL), 101-121 (VWVM…DDWL), 137-157 (MVLQ…TWTL), 181-201 (WFNP…VVGT), 213-233 (GLAI…CYVA), 268-288 (GAEL…FLWF), 295-315 (VFMG…LAML), 320-340 (VVSA…MIQV), and 369-389 (KIIV…LLSL).

Belongs to the glycosyltransferase 4 family. MraY subfamily. Mg(2+) is required as a cofactor.

It localises to the cell inner membrane. The enzyme catalyses UDP-N-acetyl-alpha-D-muramoyl-L-alanyl-gamma-D-glutamyl-meso-2,6-diaminopimeloyl-D-alanyl-D-alanine + di-trans,octa-cis-undecaprenyl phosphate = di-trans,octa-cis-undecaprenyl diphospho-N-acetyl-alpha-D-muramoyl-L-alanyl-D-glutamyl-meso-2,6-diaminopimeloyl-D-alanyl-D-alanine + UMP. It functions in the pathway cell wall biogenesis; peptidoglycan biosynthesis. Its function is as follows. Catalyzes the initial step of the lipid cycle reactions in the biosynthesis of the cell wall peptidoglycan: transfers peptidoglycan precursor phospho-MurNAc-pentapeptide from UDP-MurNAc-pentapeptide onto the lipid carrier undecaprenyl phosphate, yielding undecaprenyl-pyrophosphoryl-MurNAc-pentapeptide, known as lipid I. The sequence is that of Phospho-N-acetylmuramoyl-pentapeptide-transferase from Myxococcus xanthus (strain DK1622).